The sequence spans 489 residues: ATP synthase subunit beta, chloroplastic (489 aa).

170 to 177 (GGAGVGKT) contacts ATP.

Belongs to the ATPase alpha/beta chains family. In terms of assembly, F-type ATPases have 2 components, CF(1) - the catalytic core - and CF(0) - the membrane proton channel. CF(1) has five subunits: alpha(3), beta(3), gamma(1), delta(1), epsilon(1). CF(0) has four main subunits: a(1), b(1), b'(1) and c(9-12).

It is found in the plastid. The protein localises to the chloroplast thylakoid membrane. The catalysed reaction is ATP + H2O + 4 H(+)(in) = ADP + phosphate + 5 H(+)(out). Its function is as follows. Produces ATP from ADP in the presence of a proton gradient across the membrane. The catalytic sites are hosted primarily by the beta subunits. The polypeptide is ATP synthase subunit beta, chloroplastic (Zygnema circumcarinatum (Green alga)).